A 318-amino-acid chain; its full sequence is Nisin-resistance protein (318 aa).

The helical transmembrane segment at 7–28 (ILLGLVAVCALFLGIIYLWGYK) threads the bilayer.

It localises to the cell membrane. This is Nisin-resistance protein (nsr) from Lactococcus lactis subsp. lactis (Streptococcus lactis).